A 228-amino-acid polypeptide reads, in one-letter code: ATP phosphoribosyltransferase (228 aa).

It belongs to the ATP phosphoribosyltransferase family. Short subfamily. Heteromultimer composed of HisG and HisZ subunits.

Its subcellular location is the cytoplasm. The catalysed reaction is 1-(5-phospho-beta-D-ribosyl)-ATP + diphosphate = 5-phospho-alpha-D-ribose 1-diphosphate + ATP. Its pathway is amino-acid biosynthesis; L-histidine biosynthesis; L-histidine from 5-phospho-alpha-D-ribose 1-diphosphate: step 1/9. Catalyzes the condensation of ATP and 5-phosphoribose 1-diphosphate to form N'-(5'-phosphoribosyl)-ATP (PR-ATP). Has a crucial role in the pathway because the rate of histidine biosynthesis seems to be controlled primarily by regulation of HisG enzymatic activity. The protein is ATP phosphoribosyltransferase of Acinetobacter baylyi (strain ATCC 33305 / BD413 / ADP1).